A 3856-amino-acid chain; its full sequence is MVLPQPEPIAIVGSGCRFPGSSSSPSSLWDLLEKPRDVSKEPTNERFELRGYYHPNGAHHGTMNVQRAYMLDEDVGTFDATFFNISPNEAESIDPQQRLLMEVVYEALEAGGHRLDILRGSDTAVYVGTMSVDYNDIMLRDINSIPTYFSTGTSRAILANRISYFFDWHGPSMTIDTACSSSMVALHQSVQALRSGESRVAIAGGTELLLGPEQFVGESKMNLLSPTGQSRMWDASANGYARGDGIAAIVLKKLSDAIADGDHIECLIRQTGINQDGKSTGLTVPSSAAQADLIRSTYTKGGLDIDNPRDWPQFFEAHGTGTKAGDPREASAISQCFGSQPIHGNPLYVGSIKTIIGHTEGTAGLAGVFKASLAIQHGIIPPNMLLHQLNDEVAQYCDNLRVPNAPTAWPKLPDGVPRRASVNSFGFGGTNGHAILEEYQPPTETRNTATTGRDENNASVFRIFPFSAASEESLTANLRAYATSLKTRTTVDLVDLAWTLQSRRSALPFKTSLTAECIEGLITKIDSTLEKAKANSGLKVGTRSAPTKPKVLGIFTGQGAQWATMAAGLIRTSETVRRKIEQLDGSLATLPEANRPTWRIADQLCADAEDSRLNEAALSQPLCTAIQVVLIDLLRSSGITFEAVVGHSSGEIAAAYAADYISAHDAIRIAYYRGVYAKHARGPKDQKGAMMAVGTTWEDAEELLNLPAFRGRVKIAAQNSAASLTLSGDVEALSHAKRVFDEEKKFTRLLVVDTAYHSHHMLLCSERYIHSLRTCGIQVNYNRNTSCTWYSSVKHGEPMHPEPSLGDLYWNDNMVNTVLFADAVKGAAKGSQLNLAIEVGPHPALKGPALQTLSDFEMSLPYTGVLKRKGNDLEAFSDALGFVWTHCGPGAVDFQTYEELIYPACKTPSLAIGLPAYQWDHKRVYWYQSRLAKKTQTRGEAFHELLGVPSPNNTDRDLRWSNFLKTNEIPWLNGHQLQGQTVFPAAGYVAMALEAGLKLAQGRSVKVLQIDDLTIDKAVTFDDGANFAVETLVALTGVTQGQSRTKKQTADFAVYSCANTGSSTELGVVSRGKVTVIYGTPSFSTLHSSPHNEKNMVDIQAEQFYSSLHELGYGYNGPFKTLSSTKRTLNQASARVETYGYGEDENTLIVHPTMLDVAFQASFLARMSPGDDQLWSLHVPTFIKCIRVNPELCASIPSSPTSLSLSAVLHESDSLSMLSSVDVFTEDGQETMIQVEGLSMKPFSPATADDDRSMFSTTVYGSMSPDLAMDVGNGRPPSEGLAFSQCNVALACVAQQIVHRYPHAKILEIGAGEGHATRAVLESIGSKLSYTFTDSSTEVIEKAAESFKDFKEKVLLKTFDPLGKPSSQGLDEHAYDLVIASNILASNSVSHTELENIRRLLKPGGYLLASGLTGDAPTRTLGGGTVEGNDARKHGPVNTAQWHGALRKAGFSGIDSITPQTSGMASPFSAIVTQAVDKRINFLRKPLSTPSFVRLDELVIVGNQSLKAAQLTEEIYDHLIQFCGKITVLDGLPTDDDDISSMATFINLADIHEPIFRDISAEQFEGLKCLFELASNILWVTEGARADEPYHNASIGFGRSIAYEMPHLSLQFLDLNDTGSTASRVISEAVLRLVALREWEETEHNFKDKTLWSREPELYVEKERLMVPRLLQVDDQNDRINSLRRVVTKMVDPDNSSVLISKAVDGSFVLREEVLRQSGQNFVQIKHSVLSAINVAPEAFLFLGAGFSQVTDEVVITLSDANASMSTPLAHVPAQWHTGGLSTLISAVARQLLARRLISMVVAHSHLLVHGLDENESFVSILKQHAGLKDIDIKFSAANPAANSEWIQVTPWTSSHVTRQSIPATTTHFLDLSADDKNQDAAVIIREALPVICKHIGVSDLFRPESFVPAGSKDSILRALQDAVREAKTTASSEIPSASIRPTELIDATVLKSPLSVVDWTVDGEVPVQVQPIDATQLFSQHKTYVLVGLSGRLGQSISQWMSQNGAGCICLTSRTPKADPEWQAEMEKKGTTVKLIPMDVTNRADVERVFADLRANSPPIAGVASGAAVFHDATFSEMTHEILEKVMNPKVVGTKNLDEVLGDTKLDFFIVFSSLTSVVGNSGQSNYTAANAYMTGLVGQRRKRGLAATSLDIGSIVGIGYLERASDTAREQLIRNGFMAVSETDLHQLLAEAIRAGATNSSASPMVTTGCRNVQEGEEFPVPWIDDPRMQHKVILGEHSSKAEMAGKKSALPVRDQLAVSKSTADALEILKELSECFAAKLAMISRLADGQVGHDIPLVELGIDSLVAVEVRGWFLKELKTDIPVLKVLGGGTVATLCQQALEKLPESILPNVESGGPSKTGSSKPTAKPSVAKPRSPPSPSGSETGSPGRWSENNTTSPQSTLSSDQSPSSTPATVLSNVPSNVDLTTVAKSEMALIPSSDFVKTELVSFQQSRFWFLGLLIDDQATFNVTFYLRITGNLRTGDLERAVRLVTNRHESLRTCFVAHEQEADLAYQKVLPNSLVRLKRKNINRVEDVDIEYAAMKQVPFDLASGNLMRLVLLTLSASEHYLLFNYHHILMDGVSLQNFLADLEKAYQRQPLGPPPCQVPEFSRVQRAAFESGVFNEDIAYWKNEFPNGHPVLPLLPMSHITSRMALNSFNVHQVECRVDSELMAKVREAARVNGCTTFHFYLATFKAMLFRFTDAGDLTIGIADANRISPDVEGTIGLLLNLLTLRFQRNPSQTFAQSVGEARGKALEALKHSNVPFDILLKELNVPRSSAYSPFFQAFFDYRQGHQEKLSFGSTEFEFLQVHPGRTAYDMTLDVTDGADSARILFRTQASLYDKTAAQLLLNTFIHLLDTFATNTSLKLDDFALFSDKELKLALNVGHGPNFESSWPGGTIPHRIDQIAKENDDKVALKDGHGTILTYGAMINRTQAIAAALQQVGVGESSRVLVFEDATVDWPCSMLAIMRLGAVYVPLDLRNPLPRLADVAGSCKPVAILVDSTTLDHVAQVNVTFAEVVNVSEVGVNSIKVANVSRSDAVAALLYTSGSTGKPKGIVVTHSGLRNEIEGYTSQWVLKAERVLQQSAFTFNHSSDQIYTGLVNGGFVYIVPWDKRGDPIEVTKIIKEENITYTKATPAEYSLWLDYGSGNLKQASSWRFAFGGGESLTGTITRSLATLQLPNLRFFNSYGPTEISISSTKMEVAYRDSPPDGRIPCGFMLPNYAAYILDDQRKPVPVGMPGELYIGGAGVSLGYLDNEELTEQHFLPNPYAIPEYVAQGWTRMYRTGDIAHLQGDGAMVFHNRIAGDTQVKIRGLRIELGDIESNIIKAAEGALKEVAVTLRDGDPPILVAHVVFAPHHHIVDTEAFLVQLLKNLDVPQYMVPVMAIPLERMPLSNHSKTDRKALKELPLPQRSNHDTGDNTESLTETMLELRRLWVDVLNTGELGLDIGPSTSFFTVGGNSLLIVRLQSRIRQTFNVTVRLFDLIDANTLSDMTQKIEESLNVDLIDWDKETALLSDFTMPEATKHQPLKTTDKVILVTGSGGFLGKHILTELIARPDVSKIHCIGLRDKPGNTPRRLALNSTKIITHSGDLTEPWLGLGEEKFASLTLEVDVILHMAATRSFWDNYSLLRPINVTPTKLLVQMATGRKIPIHYVSSAGVVSAEGVEILAGSAAKYQPRVDGSNGYVASRWASEQILEHAVSALDVPVSIHRFVPAKEPANQTVVVDALQHFVSFVDELSIMPDFSGTTGHFEMTPIHSAASQLAENLVKTPTQQSSLLEFVHHDCPIRIDIAEMVAFLEEQRGGKGLEKVPGLKFVGDMKRAGLAYFVTSQTLLMGGTNGTSVVLESRR.

The Ketosynthase family 3 (KS3) domain occupies 6 to 438 (PEPIAIVGSG…GTNGHAILEE (433 aa)). Catalysis depends on for beta-ketoacyl synthase activity residues Cys179, His318, and His358. Residues 554–885 (IFTGQGAQWA…FSDALGFVWT (332 aa)) are malonyl-CoA:ACP transacylase (MAT) domain. Residues 943–1081 (HELLGVPSPN…GKVTVIYGTP (139 aa)) form an N-terminal hotdog fold region. The dehydratase (DH) domain stretch occupies residues 943 to 1247 (HELLGVPSPN…LSMKPFSPAT (305 aa)). In terms of domain architecture, PKS/mFAS DH spans 943–1249 (HELLGVPSPN…MKPFSPATAD (307 aa)). Catalysis depends on His975, which acts as the Proton acceptor; for dehydratase activity. The interval 1096-1249 (MVDIQAEQFY…MKPFSPATAD (154 aa)) is C-terminal hotdog fold. Asp1156 (proton donor; for dehydratase activity) is an active-site residue. Positions 1290–1456 (LACVAQQIVH…RKAGFSGIDS (167 aa)) are methyltransferase (MT) domain. A ketoreductase (KR) domain region spans residues 1984-2158 (TYVLVGLSGR…ATSLDIGSIV (175 aa)). In terms of domain architecture, Carrier 1 spans 2266-2347 (ADALEILKEL…TLCQQALEKL (82 aa)). An O-(pantetheine 4'-phosphoryl)serine modification is found at Ser2307. Residues 2351–2422 (ILPNVESGGP…SSTPATVLSN (72 aa)) are disordered. 2 stretches are compositionally biased toward low complexity: residues 2357 to 2369 (SGGP…SKPT) and 2399 to 2418 (TTSP…TPAT). A condensation (C) domain region spans residues 2446 to 2884 (VKTELVSFQQ…FALFSDKELK (439 aa)). Residues 2910-3310 (QIAKENDDKV…GAMVFHNRIA (401 aa)) form an adenylation (A) domain region. The interval 3403 to 3429 (SKTDRKALKELPLPQRSNHDTGDNTES) is disordered. In terms of domain architecture, Carrier 2 spans 3428–3507 (ESLTETMLEL…DMTQKIEESL (80 aa)). Ser3467 carries the O-(pantetheine 4'-phosphoryl)serine modification. The reductase (R) domain stretch occupies residues 3544–3768 (VTGSGGFLGK…EMTPIHSAAS (225 aa)).

In the C-terminal section; belongs to the NRP synthetase family.

It functions in the pathway secondary metabolite biosynthesis. Hybrid PKS-NRPS synthetase; part of the tra gene cluster that produces terrestric acid. The clavatol biosynthesis cluster cla and the terrestric acid cluster tra are both involved in the production of peniphenones and penilactones. The non-reducing PKS claF is responsible for the formation of clavatol from successive condensations of 3 malonyl-CoA units, presumably with a simple acetyl-CoA starter unit, and 2 methylation steps. The esterase claE probably collaborates with claF by catalyzing the hydrolysis of ACP-bound acyl intermediates to free the ACP from stalled intermediates. The clavatol oxidase claD then converts clavatol to hydroxyclavatol. Spontaneous dehydration of hydroxyclavatol leads to the accumulation of the highly active ortho-quinone methide. On the other hand, the PKS-NRPS hybrid traA is involved in the formation of crustosic acid, with the help of traB and traD. The polyketide synthase module (PKS) of traA is responsible for the synthesis of the polyketide backbone via the condensation of an acetyl-CoA starter unit with 3 malonyl-CoA units. The downstream nonribosomal peptide synthetase (NRPS) module then amidates the carboxyl end of the polyketide with L-malic acid. Because traA lacks a designated enoylreductase (ER) domain, the required activity is provided the enoyl reductase traG. Crustosic acid undergoes decarboxylation and isomerization to the terrestric acid, catalyzed by the 2-oxoglutarate-dependent dioxygenase traH. Both acids are further converted to the 2 gamma-butyrolactones (R)-5-methyltetronic acid and (S)-5-carboxylmethyltetronic acid, with involvement of the cytochrome P450 monooxygenase claJ. Spontaneous addition of the methide to these gamma-butyrolactones leads to peniphenone D and penilactone D, which undergo again stereospecific attacking by methide to give penilactones A and B. The chain is Hybrid PKS-NRPS synthetase traA from Penicillium crustosum (Blue mold fungus).